Here is a 318-residue protein sequence, read N- to C-terminus: Ubiquitin-like domain-containing CTD phosphatase 1 (318 aa).

The Ubiquitin-like domain maps to 3–81 (LSLIIKWGGQ…IMMMGTREES (79 aa)). An FCP1 homology domain is found at 133 to 294 (PREGKKLLVL…LKLTQYLKEI (162 aa)). The Mg(2+) site is built by aspartate 143, aspartate 145, and aspartate 253.

Requires Mg(2+) as cofactor.

It is found in the nucleus. It catalyses the reaction O-phospho-L-seryl-[protein] + H2O = L-seryl-[protein] + phosphate. It carries out the reaction O-phospho-L-threonyl-[protein] + H2O = L-threonyl-[protein] + phosphate. Dephosphorylates 26S nuclear proteasomes, thereby decreasing their proteolytic activity. Recruited to the 19S regulatory particle of the 26S proteasome where it dephosphorylates 19S component PSMC2 which impairs PSMC2 ATPase activity and disrupts 26S proteasome assembly. Has also been reported to stimulate the proteolytic activity of the 26S proteasome. The polypeptide is Ubiquitin-like domain-containing CTD phosphatase 1 (UBLCP1) (Gallus gallus (Chicken)).